A 321-amino-acid chain; its full sequence is Glutaminase (321 aa).

The substrate site is built by Ser69, Asn120, Glu165, Asn172, Tyr196, Tyr248, and Val266.

The protein belongs to the glutaminase family. As to quaternary structure, homotetramer.

It carries out the reaction L-glutamine + H2O = L-glutamate + NH4(+). The protein is Glutaminase of Bacteroides thetaiotaomicron (strain ATCC 29148 / DSM 2079 / JCM 5827 / CCUG 10774 / NCTC 10582 / VPI-5482 / E50).